The following is a 296-amino-acid chain: 33 kDa chaperonin (296 aa).

Cystine bridges form between C233–C235 and C267–C270.

The protein belongs to the HSP33 family. Under oxidizing conditions two disulfide bonds are formed involving the reactive cysteines. Under reducing conditions zinc is bound to the reactive cysteines and the protein is inactive.

Its subcellular location is the cytoplasm. Functionally, redox regulated molecular chaperone. Protects both thermally unfolding and oxidatively damaged proteins from irreversible aggregation. Plays an important role in the bacterial defense system toward oxidative stress. This chain is 33 kDa chaperonin, found in Actinobacillus pleuropneumoniae serotype 7 (strain AP76).